The sequence spans 236 residues: Ribosome maturation protein SDO1 homolog (236 aa).

Belongs to the SDO1/SBDS family.

This Pyrococcus horikoshii (strain ATCC 700860 / DSM 12428 / JCM 9974 / NBRC 100139 / OT-3) protein is Ribosome maturation protein SDO1 homolog.